Reading from the N-terminus, the 489-residue chain is Beta-galactosidase (489 aa).

The residue at position 116 (Lys-116) is an N6-methyllysine; partial. Residue Lys-135 is modified to N6-methyllysine. Catalysis depends on Glu-206, which acts as the Proton donor. 2 positions are modified to N6-methyllysine; partial: Lys-273 and Lys-311. Lys-332 is modified (N6-methyllysine). Residue Glu-387 is the Nucleophile of the active site.

In terms of assembly, homotetramer.

The enzyme catalyses Hydrolysis of terminal non-reducing beta-D-galactose residues in beta-D-galactosides.. The polypeptide is Beta-galactosidase (lacS) (Saccharolobus solfataricus (strain ATCC 35092 / DSM 1617 / JCM 11322 / P2) (Sulfolobus solfataricus)).